Reading from the N-terminus, the 183-residue chain is Potassium-transporting ATPase KdpC subunit (183 aa).

Residues 10-30 (ASLLVLSLVTGVAYPLLVTGI) traverse the membrane as a helical segment.

It belongs to the KdpC family. In terms of assembly, the system is composed of three essential subunits: KdpA, KdpB and KdpC.

The protein resides in the cell inner membrane. Part of the high-affinity ATP-driven potassium transport (or Kdp) system, which catalyzes the hydrolysis of ATP coupled with the electrogenic transport of potassium into the cytoplasm. This subunit acts as a catalytic chaperone that increases the ATP-binding affinity of the ATP-hydrolyzing subunit KdpB by the formation of a transient KdpB/KdpC/ATP ternary complex. The sequence is that of Potassium-transporting ATPase KdpC subunit from Pseudomonas aeruginosa (strain ATCC 15692 / DSM 22644 / CIP 104116 / JCM 14847 / LMG 12228 / 1C / PRS 101 / PAO1).